The following is a 446-amino-acid chain: MAHVITRINAREILDSRGNPTVEVDLETNLGIFRAAVPSGASTGIYEALELRDNDKSRYLGKGVQKAIKNINEIIAPKLIGMNCTEQKKIDNLMVEELDGSKNEWGWSKSKLGANAILAISMAVCRAGAAANKVSLYKYLAQLAGKKSDQMVLPVPCLNVINGGSHAGNKLSFQEFMIVPVGAPSFKEALRYGAEVYHTLKSEIKKKYGIDATNVGDEGGFAPNILNANEALDLLVTAIKSAGYEGKVKIAMDVAASEFYNSENKTYDLDFKTPNNDKSLVKTGAQLVDLYIDLVKKYPIVSIEDPFDQDDWENYAKLTAAIGKDVQIVGDDLLVTNPTRITKALEKNACNALLLKVNQIGSITEAIEACLLSQKNNWGVMVSHRSGETEDVFIADLVVALRTGQIKTGAPCRSERNAKYNQLLRIEESLGNNAVFAGEKFRLQLN.

Residue Ser42 participates in Mg(2+) binding. The residue at position 42 (Ser42) is a Phosphoserine. Residues Glu104 to Ser108 carry the Pentapeptide insert motif. Position 133 is an N6-acetyllysine (Lys133). Lys138 participates in a covalent cross-link: Glycyl lysine isopeptide (Lys-Gly) (interchain with G-Cter in ubiquitin). Residue Tyr139 is modified to Phosphotyrosine. Substrate contacts are provided by His166 and Glu175. Residue Glu218 is the Proton donor of the active site. A Mg(2+)-binding site is contributed by Asp253. A DKSLVK motif motif is present at residues Asp277–Lys282. Mg(2+) contacts are provided by Glu304 and Asp331. Glu304 and Asp331 together coordinate substrate. At Thr339 the chain carries Phosphothreonine. Lys356 functions as the Proton acceptor in the catalytic mechanism. Lys375 bears the N6-acetyllysine mark. Substrate is bound by residues Ser383 to Ser386 and Lys407.

This sequence belongs to the enolase family. Homodimer. Forms a complex at least composed of DegP, ENO and HSP70. Interacts with G-actin. Interacts (via the DKSLVK motif) with mammalian host PLG/plasminogen (present in the mosquito blood meal); the interaction occurs at the ookinete cell surface and is required for ookinete invasion of the mosquito midgut. Interacts with A.gambiae EBP; depending on the Plasmodium species, the interaction is either involved in ookinete invasion of the mosquito midgut (P.berghei) or is dispensable (P.falciparum). Requires Mg(2+) as cofactor.

It is found in the cytoplasm. The protein localises to the nucleus. The protein resides in the cytoskeleton. Its subcellular location is the cell surface. It localises to the cell membrane. It is found in the vacuole. The enzyme catalyses (2R)-2-phosphoglycerate = phosphoenolpyruvate + H2O. The protein operates within carbohydrate degradation; glycolysis; pyruvate from D-glyceraldehyde 3-phosphate: step 4/5. Glycolytic enzyme that catalyzes the conversion of 2-phosphoglycerate to phosphoenolpyruvate. In addition to glycolysis, involved in various processes such as parasite development and invasion. Plays an essential role during ookinete invasion of the mosquito vector midgut by mediating the interaction of the ookinete with the midgut epithelium and, further, by binding to mammalian host plasminogen in the blood meal, whose conversion to active plasmin promotes the invasion process. This Plasmodium falciparum (isolate 3D7) protein is Enolase.